The primary structure comprises 1024 residues: Isoleucine--tRNA ligase (1024 aa).

Positions 52-62 (PTANGRPHVGH) match the 'HIGH' region motif. Residues 590 to 594 (KMSKS) carry the 'KMSKS' region motif. Lys593 provides a ligand contact to ATP.

This sequence belongs to the class-I aminoacyl-tRNA synthetase family. IleS type 2 subfamily. As to quaternary structure, monomer. It depends on Zn(2+) as a cofactor.

It is found in the cytoplasm. The catalysed reaction is tRNA(Ile) + L-isoleucine + ATP = L-isoleucyl-tRNA(Ile) + AMP + diphosphate. Its function is as follows. Catalyzes the attachment of isoleucine to tRNA(Ile). As IleRS can inadvertently accommodate and process structurally similar amino acids such as valine, to avoid such errors it has two additional distinct tRNA(Ile)-dependent editing activities. One activity is designated as 'pretransfer' editing and involves the hydrolysis of activated Val-AMP. The other activity is designated 'posttransfer' editing and involves deacylation of mischarged Val-tRNA(Ile). This is Isoleucine--tRNA ligase from Picrophilus torridus (strain ATCC 700027 / DSM 9790 / JCM 10055 / NBRC 100828 / KAW 2/3).